We begin with the raw amino-acid sequence, 369 residues long: Porphobilinogen deaminase, chloroplastic (369 aa).

The N-terminal 46 residues, 1 to 46, are a transit peptide targeting the chloroplast; sequence MEMTLYSSSSFSLPSAPSNPSLSLFTSSFRFSSFKTSPFSKCRIRA. C303 carries the post-translational modification S-(dipyrrolylmethanemethyl)cysteine.

Belongs to the HMBS family. The cofactor is dipyrromethane.

Its subcellular location is the plastid. It is found in the chloroplast. It catalyses the reaction 4 porphobilinogen + H2O = hydroxymethylbilane + 4 NH4(+). It functions in the pathway porphyrin-containing compound metabolism; protoporphyrin-IX biosynthesis; coproporphyrinogen-III from 5-aminolevulinate: step 2/4. The protein operates within porphyrin-containing compound metabolism; chlorophyll biosynthesis. In terms of biological role, tetrapolymerization of the monopyrrole PBG into the hydroxymethylbilane pre-uroporphyrinogen in several discrete steps. The sequence is that of Porphobilinogen deaminase, chloroplastic (HEMC) from Pisum sativum (Garden pea).